The following is a 680-amino-acid chain: Extracellular matrix protein 2 (680 aa).

The first 20 residues, 1–20, serve as a signal peptide directing secretion; it reads MKFSSLYCFLLLLIFQTDFG. The 58-residue stretch at 100 to 157 folds into the VWFC domain; it reads GHCLANGMIMYNKAVWSPEPCTTCLCLNGKVLCDETKCHPQMCPQTIIPEGECCPVCS. Acidic residues predominate over residues 189–198; it reads QLEEDEEEVK. The tract at residues 189 to 293 is disordered; the sequence is QLEEDEEEVK…RLPIPATPRG (105 aa). Residues 223-238 show a composition bias toward basic and acidic residues; it reads QSREGKAQRPEEEGRQ. Positions 249-272 are enriched in acidic residues; sequence NEEDDDEEEEDDDDEEEDDDDEDE. Residues 275–277 carry the Cell attachment site motif; the sequence is RGD. Positions 288 to 325 constitute an LRRNT domain; the sequence is PATPRGIPSLPSMCSLSYKTISCISADLTQIPPLTAPE. LRR repeat units lie at residues 349 to 369, 375 to 396, 397 to 417, 420 to 440, 446 to 466, 467 to 488, 491 to 511, 517 to 538, 539 to 559, 563 to 583, 590 to 611, 613 to 634, and 642 to 665; these read NLER…GPKA, NLMR…LPST, LEEL…SLSD, QLVT…NSLA, SLSY…GLPA, SIEE…SFNH, KINV…APLA, NLES…LPKS, LVHL…VFGH, GLEY…DRVS, SLRE…VQEM, ALHF…QICN, and NLQH…AFSC. N-linked (GlcNAc...) asparagine glycosylation is present at Asn359. An N-linked (GlcNAc...) asparagine glycan is attached at Asn430. Asn487 is a glycosylation site (N-linked (GlcNAc...) asparagine).

Belongs to the small leucine-rich proteoglycan (SLRP) family. SLRP class I subfamily. Interacts with numerous extracellular matrix proteins. Interacts with MSL1 and RASSF1.

The protein resides in the secreted. It localises to the extracellular space. The protein localises to the extracellular matrix. In terms of biological role, promotes matrix assembly and cell adhesiveness. This is Extracellular matrix protein 2 (ECM2) from Bos taurus (Bovine).